A 166-amino-acid chain; its full sequence is Interferon gamma (166 aa).

Positions Met-1–Cys-23 are cleaved as a signal peptide. Pyrrolidone carboxylic acid is present on Gln-24. N-linked (GlcNAc...) asparagine glycosylation is found at Asn-39 and Asn-106.

This sequence belongs to the type II (or gamma) interferon family. In terms of assembly, homodimer. Interacts with IFNGR1 (via extracellular domain); this interaction promotes IFNGR1 dimerization. In terms of tissue distribution, released primarily from activated T lymphocytes.

Its subcellular location is the secreted. Type II interferon produced by immune cells such as T-cells and NK cells that plays crucial roles in antimicrobial, antiviral, and antitumor responses by activating effector immune cells and enhancing antigen presentation. Primarily signals through the JAK-STAT pathway after interaction with its receptor IFNGR1 to affect gene regulation. Upon IFNG binding, IFNGR1 intracellular domain opens out to allow association of downstream signaling components JAK2, JAK1 and STAT1, leading to STAT1 activation, nuclear translocation and transcription of IFNG-regulated genes. Many of the induced genes are transcription factors such as IRF1 that are able to further drive regulation of a next wave of transcription. Plays a role in class I antigen presentation pathway by inducing a replacement of catalytic proteasome subunits with immunoproteasome subunits. In turn, increases the quantity, quality, and repertoire of peptides for class I MHC loading. Increases the efficiency of peptide generation also by inducing the expression of activator PA28 that associates with the proteasome and alters its proteolytic cleavage preference. Up-regulates as well MHC II complexes on the cell surface by promoting expression of several key molecules such as cathepsins B/CTSB, H/CTSH, and L/CTSL. Participates in the regulation of hematopoietic stem cells during development and under homeostatic conditions by affecting their development, quiescence, and differentiation. The polypeptide is Interferon gamma (IFNG) (Canis lupus familiaris (Dog)).